A 352-amino-acid chain; its full sequence is Aliphatic aldoxime dehydratase (352 aa).

Residue S219 participates in an aliphatic aldoxime binding. Heme b is bound at residue H299. H320 serves as a coordination point for an aliphatic aldoxime. H320 is an active-site residue.

This sequence belongs to the heme-containing dehydratase family. As to quaternary structure, homodimer. Heme b is required as a cofactor. It depends on Ca(2+) as a cofactor.

The enzyme catalyses an aliphatic aldoxime = a nitrile + H2O. Active when the heme iron is in the ferrous state. Is very sensitive to AgNO(3), is also inhibited by hydroxylamine and phenylhydrazine, and hardly inhibited by thiol reagents. Not sensitive to chelating agents and serine-modifying reagents. Catalyzes the dehydration of aldoximes to their corresponding nitrile. Aliphatic aldoximes are more effective substrates than aromatic aldoximes. Shows high activity with butyraldoxime and acetaldoxime, but only weak activity with the aromatic aldoxime pyridine-2-aldoxime. Cannot use benzaldoxime, isonitrosoacetophenone and pyridine-4-aldoxime. Is involved in the metabolism of aldoxime in vivo. The protein is Aliphatic aldoxime dehydratase of Pseudomonas chlororaphis (Pseudomonas aureofaciens).